A 675-amino-acid polypeptide reads, in one-letter code: MESGTSSPQPPQLDPLDAFPQKGLEPGDIAVLVLYFLFVLAVGLWSTVKTKRDTVKGYFLAGGDMVWWPVGASLFASNVGSGHFIGLAGSGAATGISVSAYELNGLFSVLMLAWIFLPIYIAGQVTTMPEYLRKRFGGIRIPIILAVLYLFIYIFTKISVDMYAGAIFIQQSLHLDLYLAIVGLLAITAVYTVAGGLAAVIYTDALQTLIMLIGALTLMGYSFAAVGGMEGLKEKYFLALASNRSENSSCGLPREDAFHIFRDPLTSDLPWPGVLFGMSIPSLWYWCTDQVIVQRTLAAKNLSHAKGGALMAAYLKVLPLFIMVFPGMVSRILFPDQVACADPEICQKICSNPSGCSDIAYPKLVLELLPTGLRGLMMAVMVAALMSSLTSIFNSASTIFTMDLWNHLRPRASEKELMIVGRVFVLLLVLVSILWIPVVQASQGGQLFIYIQSISSYLQPPVAVVFIMGCFWKRTNEKGAFWGLISGLLLGLVRLVLDFIYVQPRCDQPDERPVLVKSIHYLYFSMILSTVTLITVSTVSWFTEPPSKEMVSHLTWFTRHDPVVQKEQAPPAAPLSLTLSQNGMPEASSSSSVQFEMVQENTSKTHSCDMTPKQSKVVKAILWLCGIQEKGKEELPARAEAIIVSLEENPLVKTLLDVNLIFCVSCAIFIWGYFA.

At 1-27 (MESGTSSPQPPQLDPLDAFPQKGLEPG) the chain is on the extracellular side. A helical membrane pass occupies residues 28 to 48 (DIAVLVLYFLFVLAVGLWSTV). Residues 49 to 65 (KTKRDTVKGYFLAGGDM) lie on the Cytoplasmic side of the membrane. The chain crosses the membrane as a helical span at residues 66–88 (VWWPVGASLFASNVGSGHFIGLA). Over 89 to 102 (GSGAATGISVSAYE) the chain is Extracellular. A helical membrane pass occupies residues 103-123 (LNGLFSVLMLAWIFLPIYIAG). Over 124 to 135 (QVTTMPEYLRKR) the chain is Cytoplasmic. Residues 136-156 (FGGIRIPIILAVLYLFIYIFT) traverse the membrane as a helical segment. Topologically, residues 157 to 180 (KISVDMYAGAIFIQQSLHLDLYLA) are extracellular. The chain crosses the membrane as a helical span at residues 181–201 (IVGLLAITAVYTVAGGLAAVI). Over 202–208 (YTDALQT) the chain is Cytoplasmic. Residues 209 to 229 (LIMLIGALTLMGYSFAAVGGM) traverse the membrane as a helical segment. Residues 230 to 272 (EGLKEKYFLALASNRSENSSCGLPREDAFHIFRDPLTSDLPWP) are Extracellular-facing. The chain crosses the membrane as a helical span at residues 273 to 293 (GVLFGMSIPSLWYWCTDQVIV). The Cytoplasmic portion of the chain corresponds to 294–308 (QRTLAAKNLSHAKGG). The chain crosses the membrane as a helical span at residues 309–329 (ALMAAYLKVLPLFIMVFPGMV). The Extracellular segment spans residues 330-375 (SRILFPDQVACADPEICQKICSNPSGCSDIAYPKLVLELLPTGLRG). Residues 376–396 (LMMAVMVAALMSSLTSIFNSA) form a helical membrane-spanning segment. At 397 to 418 (STIFTMDLWNHLRPRASEKELM) the chain is on the cytoplasmic side. The helical transmembrane segment at 419 to 439 (IVGRVFVLLLVLVSILWIPVV) threads the bilayer. The Extracellular segment spans residues 440–446 (QASQGGQ). A helical membrane pass occupies residues 447–467 (LFIYIQSISSYLQPPVAVVFI). At 468–479 (MGCFWKRTNEKG) the chain is on the cytoplasmic side. The chain crosses the membrane as a helical span at residues 480–500 (AFWGLISGLLLGLVRLVLDFI). Over 501 to 521 (YVQPRCDQPDERPVLVKSIHY) the chain is Extracellular. A helical membrane pass occupies residues 522 to 542 (LYFSMILSTVTLITVSTVSWF). At 543 to 654 (TEPPSKEMVS…SLEENPLVKT (112 aa)) the chain is on the cytoplasmic side. A helical transmembrane segment spans residues 655–675 (LLDVNLIFCVSCAIFIWGYFA).

The protein belongs to the sodium:solute symporter (SSF) (TC 2.A.21) family. In terms of tissue distribution, highest expression in heart, skeletal muscle, kidney, liver and placenta. Weaker expression in brain, colon, spleen, lung and peripheral blood leukocytes.

It localises to the membrane. Its subcellular location is the apical cell membrane. It carries out the reaction myo-inositol(out) + 2 Na(+)(out) = myo-inositol(in) + 2 Na(+)(in). It catalyses the reaction 1D-chiro-inositol(out) + 2 Na(+)(out) = 1D-chiro-inositol(in) + 2 Na(+)(in). The catalysed reaction is D-glucose(out) + 2 Na(+)(out) = D-glucose(in) + 2 Na(+)(in). The enzyme catalyses D-xylose(out) + 2 Na(+)(out) = D-xylose(in) + 2 Na(+)(in). MI transport activity inhibited by D-chiro-inositol (DCI), phlorizin (Pz) and sodium (Na(+)). Insulin increases D-chiro-inositol uptake. Functionally, involved in the sodium-dependent cotransport of myo-inositol (MI) with a Na(+):MI stoichiometry of 2:1. Exclusively responsible for apical MI transport and absorption in intestine. Can also transport D-chiro-inositol (DCI) but not L-fucose. Exhibits stereospecific cotransport of both D-glucose and D-xylose. May induce apoptosis through the TNF-alpha, PDCD1 pathway. May play a role in the regulation of MI concentration in serum, involving reabsorption in at least the proximal tubule of the kidney. The sequence is that of Sodium/myo-inositol cotransporter 2 from Homo sapiens (Human).